Consider the following 490-residue polypeptide: Subtilisin-like protease 8 (490 aa).

The N-terminal stretch at 1 to 26 (MKGLLSLSVLPVLAYASPMIVDSIHQ) is a signal peptide. Residues 27–134 (DAAPILSSTN…YIERDSEVRA (108 aa)) constitute a propeptide that is removed on maturation. Residues 43 to 133 (SYIVVFKKGV…EYIERDSEVR (91 aa)) enclose the Inhibitor I9 domain. One can recognise a Peptidase S8 domain in the interval 144–450 (PWGLARISHR…GGSDNYKEIV (307 aa)). Residues D180 and H212 each act as charge relay system in the active site. N-linked (GlcNAc...) asparagine glycosylation is present at N282. S378 serves as the catalytic Charge relay system. N455 carries an N-linked (GlcNAc...) asparagine glycan.

The protein belongs to the peptidase S8 family.

It localises to the secreted. Secreted subtilisin-like serine protease with keratinolytic activity that contributes to pathogenicity. This chain is Subtilisin-like protease 8 (SUB8), found in Arthroderma otae (strain ATCC MYA-4605 / CBS 113480) (Microsporum canis).